Consider the following 501-residue polypeptide: MESRLARLTTLQVTAGDNLRRTSIIGTIGPKTNNPEVLVALRKAGLNIVRMNFSHGSYEYHQSVIENARKSEELYPGRPLAIALDTKGPEIRTGTTTGEVDYPIPPNHEMIFSTDEKYAKACDDKVMFVDYANITKVISKGKIIYVDDGVLSFEVLEVVDGKTLKVKSLNAGKICSHKGVNLPGTDVDLPALSEKDKADLRFGVKNGVHMVFASFIRTAQDVLTIREVLGEDGKDIKIVVKIENQQGVNNFDEILKVTDAVMVARGDLGIEIPAPEVLAVQKKLIAKSNLAGKPVICATQMLESMTYNPRPTRAEVSDVGNAILDGADCVMLSGETAKGNYPINAVTTMADTALIAEQAIAYQPLYDDLRNLTPKPTSTTETVAASAVAAVYEQKAKAIIVLSTSGTTPRLVSKYRPDCPIILVTRNPRAARFSHLSRGVFPFVYEADSVADWTEDVELRLKFGIEKAIEMGVMKKGDTYVSIQGFKAGEGHSNTLQVSNA.

Residue R50 participates in substrate binding. Positions 52, 54, 85, and 86 each coordinate K(+). Residue N52–H55 participates in ATP binding. ATP-binding residues include R92 and K178. E243 contacts Mg(2+). Positions 266, 267, and 299 each coordinate substrate. D267 lines the Mg(2+) pocket.

Belongs to the pyruvate kinase family. As to quaternary structure, homotetramer. Mg(2+) serves as cofactor. It depends on K(+) as a cofactor.

The catalysed reaction is pyruvate + ATP = phosphoenolpyruvate + ADP + H(+). It participates in carbohydrate degradation; glycolysis; pyruvate from D-glyceraldehyde 3-phosphate: step 5/5. This chain is Pyruvate kinase (PYK1), found in Naumovozyma castellii (Yeast).